A 647-amino-acid polypeptide reads, in one-letter code: Meiotically up-regulated protein C8C9.04 (647 aa).

2 disordered regions span residues 1–241 (MTTN…ELKP) and 387–647 (RAQQ…KLFH). A compositionally biased stretch (polar residues) spans 29–46 (KSTNAVEQNNNSSQASVT). The segment covering 49-67 (NKKKAAKRAKKKAAKKKKQ) has biased composition (basic residues). The segment covering 92-103 (TILQEPGFTQTI) has biased composition (polar residues). A compositionally biased stretch (low complexity) spans 134-145 (PSASTSTAVPTT). The segment covering 146–155 (EARNTSITEP) has biased composition (polar residues). A compositionally biased stretch (low complexity) spans 156 to 177 (ANSPSSSSSSASTKSTATTQSA). Serine 162 and serine 165 each carry phosphoserine. Threonine 168 bears the Phosphothreonine mark. The span at 193–215 (QLGNSPASITSKPATTSAAQPSS) shows a compositional bias: polar residues. Phosphoserine occurs at positions 197 and 200. Basic and acidic residues predominate over residues 232-241 (AEKEIPELKP). Composition is skewed to polar residues over residues 390 to 406 (QPEQ…TETV), 413 to 432 (VSST…TESE), and 488 to 508 (PSST…AQSS). Phosphoserine is present on serine 396. A phosphoserine mark is found at serine 489 and serine 490. Threonine 491 bears the Phosphothreonine mark. Phosphoserine occurs at positions 515, 519, and 523. Residues 518 to 530 (ASAPSSPGTTSAA) show a composition bias toward low complexity. Positions 561–589 (GSATTIPSPGSATTKPTPGSATTKPTPVS) are enriched in polar residues. A compositionally biased stretch (low complexity) spans 596–613 (AGTTKPAPAAGATATAEN). The segment covering 633–647 (SWFKRMKKSFGKLFH) has biased composition (basic residues).

In terms of biological role, has a role in meiosis and sporulation. The sequence is that of Meiotically up-regulated protein C8C9.04 from Schizosaccharomyces pombe (strain 972 / ATCC 24843) (Fission yeast).